Reading from the N-terminus, the 187-residue chain is Transcriptional repressor NrdR (187 aa).

Positions 1–21 (MQCPYCQHTNSRVLESRSSEG) are disordered. A zinc finger lies at 3–34 (CPYCQHTNSRVLESRSSEGGQSIRRRRECLNC). An ATP-cone domain is found at 49 to 139 (ITVIKHDGKK…VYGRFKGIKD (91 aa)). Polar residues-rich tracts occupy residues 152–162 (ISSPMSQWSKS) and 170–187 (SQTSPCLSLTHNGSENSR). The disordered stretch occupies residues 152-187 (ISSPMSQWSKSSTRDRDQSQTSPCLSLTHNGSENSR).

It belongs to the NrdR family. Requires Zn(2+) as cofactor.

In terms of biological role, negatively regulates transcription of bacterial ribonucleotide reductase nrd genes and operons by binding to NrdR-boxes. This Crocosphaera subtropica (strain ATCC 51142 / BH68) (Cyanothece sp. (strain ATCC 51142)) protein is Transcriptional repressor NrdR.